Consider the following 122-residue polypeptide: Serum amyloid A-1 protein (122 aa).

Residues 1–18 form the signal peptide; it reads MKLLTGLVFCSLVLGVSS. The tract at residues 19-45 is important for amyloid formation; forms amyloid fibrils in vitro; sequence RSFFSFLGEAFDGARDMWRAYSDMREA. Residues 95 to 122 constitute a propeptide, often cleaved during amyloidogenesis; the sequence is LADQAANEWGRSGKDPNHFRPAGLPEKY. A disordered region spans residues 98 to 122; that stretch reads QAANEWGRSGKDPNHFRPAGLPEKY. At asparagine 101 the chain carries N4,N4-dimethylasparagine.

This sequence belongs to the SAA family. In terms of assembly, homohexamer; dimer of trimers. Can form amyloid fibrils after partial proteolysis; the native, undenatured protein does not form amyloid fibrils (in vitro). Apolipoprotein of the HDL complex. Binds to heparin. In terms of processing, this protein is the precursor of amyloid protein A, which is formed by the removal of approximately 24 residues from the C-terminal end. Expressed by the liver; secreted in plasma (at protein level).

Its subcellular location is the secreted. Functionally, major acute phase protein. In Homo sapiens (Human), this protein is Serum amyloid A-1 protein (SAA1).